Here is a 214-residue protein sequence, read N- to C-terminus: tRNA (guanine-N(7)-)-methyltransferase (214 aa).

Glu45, Asp70, Asn97, and Asn119 together coordinate S-adenosyl-L-methionine. Lys123 is a binding site for substrate. The tract at residues 125–130 (RHNKRR) is interaction with RNA. Substrate contacts are provided by residues Asp155 and 193 to 196 (TEYE).

It belongs to the class I-like SAM-binding methyltransferase superfamily. TrmB family.

It catalyses the reaction guanosine(46) in tRNA + S-adenosyl-L-methionine = N(7)-methylguanosine(46) in tRNA + S-adenosyl-L-homocysteine. It participates in tRNA modification; N(7)-methylguanine-tRNA biosynthesis. Catalyzes the formation of N(7)-methylguanine at position 46 (m7G46) in tRNA. In Clostridium novyi (strain NT), this protein is tRNA (guanine-N(7)-)-methyltransferase.